The chain runs to 130 residues: Phosphoribosyl-AMP cyclohydrolase (130 aa).

Asp-77 is a binding site for Mg(2+). Position 78 (Cys-78) interacts with Zn(2+). Residues Asp-79 and Asp-81 each contribute to the Mg(2+) site. Residues Cys-95 and Cys-102 each contribute to the Zn(2+) site.

This sequence belongs to the PRA-CH family. Homodimer. Mg(2+) is required as a cofactor. Requires Zn(2+) as cofactor.

The protein localises to the cytoplasm. It catalyses the reaction 1-(5-phospho-beta-D-ribosyl)-5'-AMP + H2O = 1-(5-phospho-beta-D-ribosyl)-5-[(5-phospho-beta-D-ribosylamino)methylideneamino]imidazole-4-carboxamide. It functions in the pathway amino-acid biosynthesis; L-histidine biosynthesis; L-histidine from 5-phospho-alpha-D-ribose 1-diphosphate: step 3/9. Functionally, catalyzes the hydrolysis of the adenine ring of phosphoribosyl-AMP. This chain is Phosphoribosyl-AMP cyclohydrolase, found in Pseudomonas putida (strain GB-1).